Here is a 102-residue protein sequence, read N- to C-terminus: Probable endoribonuclease MazF2 (102 aa).

The protein belongs to the PemK/MazF family. In terms of assembly, forms a complex with cognate antitoxin MazE2.

In terms of biological role, toxic component of a type II toxin-antitoxin (TA) system. Acts as an endoribonuclease. Neutralized by coexpression with cognate antitoxin MazE2. This Mycobacterium tuberculosis (strain CDC 1551 / Oshkosh) protein is Probable endoribonuclease MazF2 (mazF2).